The chain runs to 213 residues: Ribonuclease HII (213 aa).

The 189-residue stretch at 25-213 (KTLCGVDEAG…FKPVKQLLPH (189 aa)) folds into the RNase H type-2 domain. Positions 31, 32, and 124 each coordinate a divalent metal cation.

It belongs to the RNase HII family. Mn(2+) serves as cofactor. Requires Mg(2+) as cofactor.

The protein localises to the cytoplasm. It catalyses the reaction Endonucleolytic cleavage to 5'-phosphomonoester.. Functionally, endonuclease that specifically degrades the RNA of RNA-DNA hybrids. This is Ribonuclease HII from Magnetococcus marinus (strain ATCC BAA-1437 / JCM 17883 / MC-1).